A 118-amino-acid polypeptide reads, in one-letter code: MRHYELMVILDPSLDERTVAPSLENFLNVIRNDGGSVEKVDVWGRRRLAYEIDKQAEGIYVVLDLNSEPASVKELDRQLNLNETVLRTKVLRRVVEPRKAARVARAAAKAKNRPEASV.

It belongs to the bacterial ribosomal protein bS6 family.

Functionally, binds together with bS18 to 16S ribosomal RNA. This Saccharopolyspora erythraea (strain ATCC 11635 / DSM 40517 / JCM 4748 / NBRC 13426 / NCIMB 8594 / NRRL 2338) protein is Small ribosomal subunit protein bS6.